The sequence spans 954 residues: Glycine dehydrogenase (decarboxylating) (954 aa).

Lys-706 carries the N6-(pyridoxal phosphate)lysine modification.

This sequence belongs to the GcvP family. In terms of assembly, the glycine cleavage system is composed of four proteins: P, T, L and H. Requires pyridoxal 5'-phosphate as cofactor.

The catalysed reaction is N(6)-[(R)-lipoyl]-L-lysyl-[glycine-cleavage complex H protein] + glycine + H(+) = N(6)-[(R)-S(8)-aminomethyldihydrolipoyl]-L-lysyl-[glycine-cleavage complex H protein] + CO2. Its function is as follows. The glycine cleavage system catalyzes the degradation of glycine. The P protein binds the alpha-amino group of glycine through its pyridoxal phosphate cofactor; CO(2) is released and the remaining methylamine moiety is then transferred to the lipoamide cofactor of the H protein. The protein is Glycine dehydrogenase (decarboxylating) of Thermosynechococcus vestitus (strain NIES-2133 / IAM M-273 / BP-1).